The sequence spans 981 residues: Anoctamin-3 (981 aa).

Residues 1–28 (MVHHSGSIQSFKQQKGMNISKSEITTEA) are compositionally biased toward polar residues. Disordered stretches follow at residues 1–32 (MVHH…SLKP) and 67–87 (PTSV…EESR). Residues 1 to 403 (MVHHSGSIQS…LYFAWLGWYT (403 aa)) lie on the Cytoplasmic side of the membrane. Positions 76-87 (DKPEHVTSEESR) are enriched in basic and acidic residues. The chain crosses the membrane as a helical span at residues 404–424 (GMLIPAAVVGLCVFFYGLVTM). N-linked (GlcNAc...) asparagine glycans are attached at residues Asn425, Asn448, and Asn455. The Extracellular portion of the chain corresponds to 425-469 (NESQVSQEICKATEVFMCPLCDKNCSLQRLNDSCIYAKVTYLFDN). The chain crosses the membrane as a helical span at residues 470–490 (GGTVFFAIFMAIWATVFLEFW). Topologically, residues 491–550 (KRRRSILTYTWDLIEWEEEEETLRPQFEAKYYRMEVINPITGKPEPHQPSSDKVTRLLVS) are cytoplasmic. The helical transmembrane segment at 551–571 (VSGIFFMISLVITAVFAVVVY) threads the bilayer. Over 572 to 592 (RLVVMEQFASFKWNFVKQHWQ) the chain is Extracellular. The helical transmembrane segment at 593 to 613 (FATSGAAVCINFIIIMLLNLA) threads the bilayer. The Cytoplasmic segment spans residues 614-640 (YEKIAYLLTNLEYPRTESEWENSFALK). A helical transmembrane segment spans residues 641 to 661 (MFLFQFVNLNSSIFYIAFFLG). The Extracellular segment spans residues 662–761 (RFVGHPGKYN…MDEYLEMVLQ (100 aa)). Residues 762–782 (FGFTTIFVAAFPLAPLLALLN) form a helical membrane-spanning segment. The Cytoplasmic portion of the chain corresponds to 783–810 (NIIEIRLDAYKFVTQWRRPLPARATDIG). Residues 811–831 (IWLGILEGIGILAVITNAFVI) form a helical membrane-spanning segment. The Extracellular portion of the chain corresponds to 832-914 (AITSDYIPRF…QYWHILAARL (83 aa)). Residue Asn866 is glycosylated (N-linked (GlcNAc...) asparagine). A helical membrane pass occupies residues 915 to 935 (AFIIVFEHLVFGIKSFIAYLI). At 936–981 (PDIPKGLRERIRREKYLVQEMMYEAELEHLQQQRRKSGQPIHHEWP) the chain is on the cytoplasmic side.

It belongs to the anoctamin family. Interacts with KCNT1/Slack. Predominantly expressed in neuronal tissues. Expressed in brain.

The protein resides in the cell membrane. The catalysed reaction is a 1,2-diacyl-sn-glycero-3-phosphocholine(in) = a 1,2-diacyl-sn-glycero-3-phosphocholine(out). It catalyses the reaction a beta-D-galactosyl-(1&lt;-&gt;1')-N-acylsphing-4-enine(out) = a beta-D-galactosyl-(1&lt;-&gt;1')-N-acylsphing-4-enine(in). Functionally, has calcium-dependent phospholipid scramblase activity; scrambles phosphatidylcholine and galactosylceramide. Does not exhibit calcium-activated chloride channel (CaCC) activity. Seems to act as potassium channel regulator and may inhibit pain signaling; can facilitate KCNT1/Slack channel activity by promoting its full single-channel conductance at very low sodium concentrations and by increasing its sodium sensitivity. The protein is Anoctamin-3 of Mus musculus (Mouse).